The sequence spans 580 residues: Glypican-3 (580 aa).

An N-terminal signal peptide occupies residues 1–24; that stretch reads MAGTVRTACLVVAMLLSLDFPGQA. Pyrrolidone carboxylic acid is present on Q25. 7 disulfides stabilise this stretch: C35–C72, C65–C262, C73–C265, C197–C349, C252–C285, C274–C422, and C278–C410. N-linked (GlcNAc...) asparagine glycans are attached at residues N124 and N241. At S352 the chain carries Phosphoserine. N418 is a glycosylation site (N-linked (GlcNAc...) asparagine). O-linked (Xyl...) (glycosaminoglycan) serine glycans are attached at residues S495 and S509. Residue N554 is the site of GPI-anchor amidated asparagine attachment. A propeptide spans 555–580 (removed in mature form); the sequence is LGNVHSPLKLLTSMAISVVCFFFLVH.

The protein belongs to the glypican family. In terms of assembly, heterodimer; disulfide-linked. Cleavage by a furin-like convertase results in production of alpha and beta chains which form a disulfide-linked heterodimer. Interacts with DPP4. Interacts with FGF2. Interacts with WNT5A. Also interacts with WNT3A and WNT7B. Interacts with hedgehog protein SHH; the heparan sulfate chains are not required for the interaction. Also interacts with hedgehog protein IHH. Interacts with CD81. Interacts with Wnt receptors FZD4, FZD7 and FZD8; the heparan sulfate chains are required for the interaction. In terms of processing, O-glycosylated; contains heparan sulfate and/or chondroitin sulfate. Cleaved intracellularly by a furin-like convertase to generate 2 subunits, alpha and beta, which remain associated through disulfide bonds and are associated with the cell surface via the GPI-anchor. This processing is essential for its role in inhibition of hedgehog signaling. A second proteolytic event may result in cleavage of the protein on the cell surface, separating it from the GPI-anchor and leading to its shedding from the cell surface.

The protein localises to the cell membrane. In terms of biological role, cell surface proteoglycan. Negatively regulates the hedgehog signaling pathway when attached via the GPI-anchor to the cell surface by competing with the hedgehog receptor PTC1 for binding to hedgehog proteins. Binding to the hedgehog protein SHH triggers internalization of the complex by endocytosis and its subsequent lysosomal degradation. Positively regulates the canonical Wnt signaling pathway by binding to the Wnt receptor Frizzled and stimulating the binding of the Frizzled receptor to Wnt ligands. Positively regulates the non-canonical Wnt signaling pathway. Binds to CD81 which decreases the availability of free CD81 for binding to the transcriptional repressor HHEX, resulting in nuclear translocation of HHEX and transcriptional repression. Inhibits the dipeptidyl peptidase activity of DPP4. Plays a role in limb patterning and skeletal development by controlling the cellular response to BMP4. Modulates the effects of growth factors BMP2, BMP7 and FGF7 on renal branching morphogenesis. Required for coronary vascular development. Plays a role in regulating cell movements during gastrulation. The chain is Glypican-3 (GPC3) from Pan troglodytes (Chimpanzee).